We begin with the raw amino-acid sequence, 110 residues long: Nucleoid-associated protein bbp_426 (110 aa).

This sequence belongs to the YbaB/EbfC family. Homodimer.

The protein resides in the cytoplasm. The protein localises to the nucleoid. Its function is as follows. Binds to DNA and alters its conformation. May be involved in regulation of gene expression, nucleoid organization and DNA protection. This is Nucleoid-associated protein bbp_426 from Buchnera aphidicola subsp. Baizongia pistaciae (strain Bp).